The chain runs to 361 residues: Septin-12 (361 aa).

The Septin-type G domain occupies 45–316 (MGFEFNIMVV…ENYRIIRLKE (272 aa)). An interaction with SEPTIN7 region spans residues 45–318 (MGFEFNIMVV…YRIIRLKESH (274 aa)). Residues 55 to 62 (GQSGLGKS) form a G1 motif region. Residues 55-62 (GQSGLGKS), Thr-88, Gly-114, 194-202 (RADSLTIEE), Gly-250, and Arg-265 contribute to the GTP site. Residues 111 to 114 (DTPG) are G3 motif. Residues 193–196 (ARAD) are G4 motif. Positions 257 to 361 (VNGRCVLGRK…WAEDNSDEDF (105 aa)) are self-association (via N-terminus) to polymerize octameric septin 12-7-6-2/4-2/4-6-7-12 filaments. The interval 333–361 (PPPAPTGTRASPGPAKMCRWAEDNSDEDF) is disordered. Residues 338 to 347 (TGTRASPGPA) are compositionally biased toward low complexity.

It belongs to the TRAFAC class TrmE-Era-EngA-EngB-Septin-like GTPase superfamily. Septin GTPase family. Septins polymerize into heterooligomeric protein complexes that form filaments, and can associate with cellular membranes, actin filaments and microtubules. GTPase activity is required for filament formation. Interacts with SEPTIN6 and SEPTIN11. Component of a octameric complex consisting of SEPTIN12, SEPTIN7, SEPTIN6 and SEPTIN2 or SEPTIN4 in the order 12-7-6-2-2-6-7-12 or 12-7-6-4-4-6-7-12 and located in the sperm annulus; the octamer polymerizes into filaments via the SEPTIN12 N- and C-termini; the SEPTIN12:SEPTIN7 association is mediated by the GTP-binding domains. Interacts with SPAG4 and LMNB1. Associates with alpha- and beta-tubulins.

The protein resides in the cytoplasm. It localises to the cytoskeleton. It is found in the spindle. The protein localises to the cell projection. Its subcellular location is the cilium. The protein resides in the flagellum. In terms of biological role, filament-forming cytoskeletal GTPase. May play a role in cytokinesis (Potential). Involved in spermatogenesis. Involved in the morphogenesis of sperm heads and the elongation of sperm tails probably implicating the association with alpha- and beta-tubulins. Forms a filamentous structure with SEPTIN7, SEPTIN6, SEPTIN2 and probably SEPTIN4 at the sperm annulus which is required for the structural integrity and motility of the sperm tail during postmeiotic differentiation. This is Septin-12 from Bos taurus (Bovine).